A 718-amino-acid polypeptide reads, in one-letter code: Polyribonucleotide nucleotidyltransferase (718 aa).

Mg(2+) contacts are provided by Asp-496 and Asp-502. A KH domain is found at 563 to 622 (PRLLTIKIDPDMIGLVIGPGGKTIKGITEETGAKIDIEDDGTVTISAVDENKAKRARNIV). In terms of domain architecture, S1 motif spans 632-700 (GDVYAGRVTR…NKGRINLTRL (69 aa)).

The protein belongs to the polyribonucleotide nucleotidyltransferase family. The cofactor is Mg(2+).

Its subcellular location is the cytoplasm. The catalysed reaction is RNA(n+1) + phosphate = RNA(n) + a ribonucleoside 5'-diphosphate. Involved in mRNA degradation. Catalyzes the phosphorolysis of single-stranded polyribonucleotides processively in the 3'- to 5'-direction. This is Polyribonucleotide nucleotidyltransferase from Trichormus variabilis (strain ATCC 29413 / PCC 7937) (Anabaena variabilis).